A 456-amino-acid chain; its full sequence is MFS-type transporter SLC18B1 (456 aa).

Methionine 1 is modified (N-acetylmethionine). Positions 1–24 are disordered; sequence MEALGDLEGPRAPGGDDPAGSAGE. The Cytoplasmic portion of the chain corresponds to 1–33; that stretch reads MEALGDLEGPRAPGGDDPAGSAGETPGWLSREQ. The span at 10–23 shows a compositional bias: low complexity; it reads PRAPGGDDPAGSAG. Residue serine 21 is modified to Phosphoserine. Residues 34–54 form a helical membrane-spanning segment; that stretch reads VFVLISAASVNLGSMMCYSIL. The Extracellular segment spans residues 55-70; sequence GPFFPKEAEKKGASNT. A helical transmembrane segment spans residues 71 to 91; that stretch reads IIGMIFGCFALFELLASLVFG. Residues 92–100 are Cytoplasmic-facing; it reads NYLVHIGAK. Residues 101–121 form a helical membrane-spanning segment; sequence FMFVAGMFVSGGVTILFGVLD. Topologically, residues 122-127 are extracellular; it reads RVPDGP. Residues 128–148 traverse the membrane as a helical segment; the sequence is VFIAMCFLVRVMDAVSFAAAM. Topologically, residues 149–161 are cytoplasmic; it reads TASSSILAKAFPN. The helical transmembrane segment at 162–184 threads the bilayer; that stretch reads NVATVLGSLETFSGLGLILGPPV. Topologically, residues 185–195 are extracellular; it reads GGFLYQSFGYE. The chain crosses the membrane as a helical span at residues 196-216; that stretch reads VPFIVLGCVVLLMVPLNMYIL. At 217 to 230 the chain is on the cytoplasmic side; that stretch reads PNYESDPGEHSFWK. A helical transmembrane segment spans residues 231 to 251; that stretch reads LIALPKVGLIAFVINSLSSCF. At 252–272 the chain is on the extracellular side; the sequence is GFLDPTLSLFVLEKFNLPAGY. Residues 273–293 traverse the membrane as a helical segment; it reads VGLVFLGMALSYAISSPLFGL. The Cytoplasmic segment spans residues 294–304; that stretch reads LSDKRPPLRKW. A helical transmembrane segment spans residues 305-325; it reads LLVFGNLITAGCYMLLGPVPI. At 326 to 331 the chain is on the extracellular side; the sequence is LHIKSQ. A helical membrane pass occupies residues 332-352; it reads LWLLVLILVVSGLSAGMSIIP. Over 353–377 the chain is Cytoplasmic; that stretch reads TFPEILSCAHENGFEEGLSTLGLVS. A helical transmembrane segment spans residues 378–398; that stretch reads GLFSAMWSIGAFMGPTLGGFL. Topologically, residues 399 to 407 are extracellular; it reads YEKIGFEWA. Residues 408-428 form a helical membrane-spanning segment; the sequence is AAIQGLWALISGLAMGLFYLL. Over 429 to 456 the chain is Cytoplasmic; that stretch reads EYSRRKRSKSQNILSTEEERTTLLPNET. Serine 438 is modified (phosphoserine).

The protein belongs to the major facilitator superfamily. As to expression, expressed in various tissues including lung, placenta, adrenal gland, liver, testis, and brain.

The protein resides in the cytoplasmic vesicle. The protein localises to the secretory vesicle membrane. It localises to the secretory vesicle. It is found in the synaptic vesicle membrane. The enzyme catalyses spermine(in) + n H(+)(out) = spermine(out) + n H(+)(in). It carries out the reaction spermidine(in) + n H(+)(out) = spermidine(out) + n H(+)(in). The catalysed reaction is serotonin(in) + n H(+)(out) = serotonin(out) + n H(+)(in). Proton-coupled polyamine antiporter involved in the translocation of polyamines from cytosol into secretory vesicles prior to their release via exocytosis. Uses the electrochemical proton gradient generated by a V-type proton-pumping ATPase to couple the efflux of protons with the uptake of a polyamine molecule. Facilitates vesicular storage of spermine and spermidine in astrocytes with an impact on glutamatergic neuronal transmission and memory formation. Upon antigen stimulation, regulates polyamine accumulation and release in mast cell secretory granules, which in turn potentiates mast cell degranulation and histamine secretion. The protein is MFS-type transporter SLC18B1 of Homo sapiens (Human).